The chain runs to 282 residues: HTH-type transcriptional activator RhaR (282 aa).

In terms of domain architecture, HTH araC/xylS-type spans 179 to 277 (DKLITRLAAS…GMTPSQWRHL (99 aa)). 2 consecutive DNA-binding regions (H-T-H motif) follow at residues 196 to 217 (DKFC…RQQT) and 244 to 267 (ISDI…TRET).

In terms of assembly, binds DNA as a dimer.

It localises to the cytoplasm. In terms of biological role, activates expression of the rhaSR operon in response to L-rhamnose. The polypeptide is HTH-type transcriptional activator RhaR (Shigella dysenteriae serotype 1 (strain Sd197)).